The chain runs to 105 residues: MAAKIRREDEVIVLTGKDKGKRGKVTQVLIAKGKVIVEGINQVKKHQKPVPALGQAGGIVTKEAPIDVSNVALFNSATGKADRVGFRIEDGKKVRFFKSTGELVK.

This sequence belongs to the universal ribosomal protein uL24 family. Part of the 50S ribosomal subunit.

One of two assembly initiator proteins, it binds directly to the 5'-end of the 23S rRNA, where it nucleates assembly of the 50S subunit. In terms of biological role, one of the proteins that surrounds the polypeptide exit tunnel on the outside of the subunit. This chain is Large ribosomal subunit protein uL24, found in Aeromonas hydrophila subsp. hydrophila (strain ATCC 7966 / DSM 30187 / BCRC 13018 / CCUG 14551 / JCM 1027 / KCTC 2358 / NCIMB 9240 / NCTC 8049).